Reading from the N-terminus, the 340-residue chain is Entry-fusion complex protein OPG094 (340 aa).

Positions 1-20 (MGGGVSVELPKRDPPPGVPT) are disordered. Glycine 2 carries N-myristoyl glycine; by host lipidation. The Virion surface portion of the chain corresponds to 2–319 (GGGVSVELPK…VQHNIKHSFD (318 aa)). A helical; Signal-anchor for type II membrane protein membrane pass occupies residues 320–340 (LKLHLISLLSLLVIWILIVAI).

This sequence belongs to the orthopoxvirus OPG086 family. In terms of assembly, interacts with OPG143. Component of the entry fusion complex (EFC) composed of OPG053, OPG076, OPG086, OPG094, OPG095, OPG099, OPG107, OPG143, OPG104, OPG147 and OPG155. Except for OPG095 and OPG053, each of the EFC proteins is required for assembly or stability of the complex. Unglycosylated because produced in viral factories instead of the classic ER -Golgi route.

The protein resides in the virion membrane. Functionally, component of the entry fusion complex (EFC), which consists of 11 proteins. During cell infection, this complex mediates entry of the virion core into the host cytoplasm by a two-step mechanism consisting of lipid mixing of the viral and cellular membranes and subsequent pore formation. The protein is Entry-fusion complex protein OPG094 (OPG094) of Vaccinia virus (strain Copenhagen) (VACV).